The sequence spans 233 residues: Uridylate kinase (233 aa).

7 to 10 (KISG) contributes to the ATP binding site. Gly-49 is a UMP binding site. ATP contacts are provided by Gly-50 and Arg-54. UMP-binding positions include Asp-68 and 129 to 136 (TGNPFFTT). ATP-binding residues include Thr-156, Tyr-162, and Asp-165.

Belongs to the UMP kinase family. Homohexamer.

It localises to the cytoplasm. It carries out the reaction UMP + ATP = UDP + ADP. The protein operates within pyrimidine metabolism; CTP biosynthesis via de novo pathway; UDP from UMP (UMPK route): step 1/1. Inhibited by UTP. In terms of biological role, catalyzes the reversible phosphorylation of UMP to UDP. The chain is Uridylate kinase from Neorickettsia sennetsu (strain ATCC VR-367 / Miyayama) (Ehrlichia sennetsu).